We begin with the raw amino-acid sequence, 725 residues long: Non-structural protein 4 (725 aa).

2 disordered regions span residues 1–26 (MSKG…GNRN) and 666–725 (DEVE…TKDE). Polar residues predominate over residues 7–16 (TVTSLVSGPP). The span at 675-686 (ENQKQELDAKSD) shows a compositional bias: basic and acidic residues. The span at 687–709 (DVEESSVEGEEDDDGSSASEETD) shows a compositional bias: acidic residues.

The sequence is that of Non-structural protein 4 from Rice gall dwarf virus (RGDV).